The sequence spans 400 residues: GDNF family receptor alpha-3 (400 aa).

Positions 1-31 are cleaved as a signal peptide; that stretch reads MVRPLNPRPLPPVVLMLLLLLPPSPLPLAAG. Cys-51 and Cys-57 form a disulfide bridge. N-linked (GlcNAc...) asparagine glycosylation is found at Asn-95 and Asn-148. 10 cysteine pairs are disulfide-bonded: Cys-162-Cys-218, Cys-169-Cys-175, Cys-186-Cys-196, Cys-191-Cys-239, Cys-220-Cys-227, Cys-248-Cys-316, Cys-255-Cys-261, Cys-272-Cys-288, Cys-281-Cys-340, and Cys-318-Cys-328. N-linked (GlcNAc...) asparagine glycosylation is present at Asn-309. The GPI-anchor amidated asparagine moiety is linked to residue Asn-374. The propeptide at 375–400 is removed in mature form; that stretch reads PAVRPQPWVPSLFSCTLPLILLLSLW.

Belongs to the GDNFR family. In terms of assembly, interacts with ARTN ligand and RET: forms a 2:2:2 ternary complex composed of ARTN ligand, GFRA3 and RET receptor. Interacts with SORL1. Post-translationally, N-glycosylated. As to expression, widely expressed in adult and fetus which exhibit a similar pattern. Essentially not expressed in the central nervous system, but highly expressed in several sensory and sympathetic ganglia of the peripheral nervous system. Moderate expression in many non-neuronal tissues, particularly those of the digestive and urogenital systems, but high expression in stomach and appendix. Several types of glandular tissues show low expression. Very low or no expression detected in the hematopoietic system.

It localises to the cell membrane. Functionally, receptor for artemin (ARTN), a growth factor that supports the survival of sensory and sympathetic peripheral neurons. ARTN-binding leads to autophosphorylation and activation of the RET receptor. The polypeptide is GDNF family receptor alpha-3 (GFRA3) (Homo sapiens (Human)).